A 1108-amino-acid chain; its full sequence is Probable arabinosyltransferase A (1108 aa).

13 helical membrane-spanning segments follow: residues 12-34 (IPRS…VPLL), 204-223 (IVMV…LAVL), 258-280 (VGLA…HVVG), 334-356 (VWMR…HWVL), 368-387 (ANRV…WLPF), 397-414 (IALG…AIAL), 421-443 (AVAV…AVAA), 463-482 (GLLA…LVVV), 531-553 (FAVL…RGHV), 582-604 (WAVQ…AFAC), 616-638 (TLYV…GWFY), 653-675 (IASH…LAAW), and 696-718 (VLAS…ASLT). The segment at 804–825 (PGLVNSDASPNKPNVAYSDSAG) is disordered.

This sequence belongs to the emb family.

It localises to the cell membrane. In terms of biological role, arabinosyl transferase responsible for the polymerization of arabinose into the arabinan of arabinogalactan. The protein is Probable arabinosyltransferase A (embA) of Mycobacterium avium.